The primary structure comprises 157 residues: Protein Smg homolog (157 aa).

This sequence belongs to the Smg family.

This Xanthomonas oryzae pv. oryzae (strain MAFF 311018) protein is Protein Smg homolog.